The chain runs to 57 residues: Large ribosomal subunit protein bL32c (57 aa).

It belongs to the bacterial ribosomal protein bL32 family.

Its subcellular location is the plastid. It localises to the chloroplast. This chain is Large ribosomal subunit protein bL32c, found in Acorus calamus (Sweet flag).